Here is a 79-residue protein sequence, read N- to C-terminus: Conotoxin ArMKLT2-031 (79 aa).

Positions 1-22 are cleaved as a signal peptide; that stretch reads MKLTCVLIIAVLFLTACQLTTG. Positions 23–46 are excised as a propeptide; sequence ETYSRGEQKDHALRSTDKNSKLTR. Residue Gln47 is modified to Pyrrolidone carboxylic acid. Cystine bridges form between Cys48–Cys62, Cys55–Cys66, and Cys61–Cys73.

Belongs to the conotoxin O1 superfamily. In terms of tissue distribution, expressed by the venom duct.

It is found in the secreted. This Conus arenatus (Sand-dusted cone) protein is Conotoxin ArMKLT2-031.